The primary structure comprises 1309 residues: Tetratricopeptide repeat protein 41 (1309 aa).

TPR repeat units follow at residues 399–432 (PQLEMDFLNEDSNVLVFSLLIEVFMAAISLKPCI), 651–684 (WIQEKPNGLLYFQHQSLRNAVEHKMLGVTISVRE), 817–851 (LTFLLFLWGFLTLLGNRRANNLFSGAAPFLVSVQS), 859–892 (LKAQNAIGELYLDIGMMQKGLTYFQKAWSNLLRF), 989–1024 (MSYFSSAVLMEFLFSRSQRKQAIEYYKQVIKIKEKA), and 1042–1079 (SDTLCKLAGQLLSGDFCHHATMEAVSYLYRSLDLRAAH).

The protein resides in the cytoplasm. This is Tetratricopeptide repeat protein 41 from Rattus norvegicus (Rat).